Reading from the N-terminus, the 637-residue chain is MATGQNRTTVPENLKKHLAVSVRNIQWSYGIFWSVSASQSGVLEWGDGYYNGDIKTRKTIQASEIKADQLGLRRSEQLSELYESLSVAESSSSGVAAGSQVTRRASAAALSPEDLADTEWYYLVCMSFVFNIGEGMPGRTFANGEPIWLCNAHTADSKVFSRSLLAKSAAVKTVVCFPFLGGVVEIGTTEHITEDMNVIQCVKTSFLEAPDPYATILPARSDYHIDNVLDPQQILGDEIYAPMFSTEPFPTASPSRTTNGFDQEHEQVADDHDSFMTERITGGASQVQSWQLMDDELSNCVHQSLNSSDCVSQTFVEGAAGRVAYGARKSRVQRLGQIQEQQRNVKTLSFDPRNDDVHYQSVISTIFKTNHQLILGPQFRNCDKQSSFTRWKKSSSSSSGTATVTAPSQGMLKKIIFDVPRVHQKEKLMLDSPEARDETGNHAVLEKKRREKLNERFMTLRKIIPSINKIDKVSILDDTIEYLQELERRVQELESCRESTDTETRGTMTMKRKKPCDAGERTSANCANNETGNGKKVSVNNVGEAEPADTGFTGLTDNLRIGSFGNEVVIELRCAWREGVLLEIMDVISDLHLDSHSVQSSTGDGLLCLTVNCKHKGSKIATPGMIKEALQRVAWIC.

A bHLH domain is found at 437-486 (DETGNHAVLEKKRREKLNERFMTLRKIIPSINKIDKVSILDDTIEYLQEL). Positions 497 to 521 (RESTDTETRGTMTMKRKKPCDAGER) are disordered. Residues 541 to 637 (NVGEAEPADT…EALQRVAWIC (97 aa)) form a binding with MYB0/GL1 and MYB23 region.

Efficient DNA binding requires dimerization with another bHLH protein. Homodimer and heterodimer with BHLH2. Interacts directly with TTG1 and MYB0/GL1 to form a complex. Its interaction with TRY prevents MYB0/GL1 binding. Interacts with MYB75/PAP1, MYB90/PAP2, TT2, CPC, MYB23 and MYB66/WER. Interacts with MYB82. In terms of tissue distribution, mostly expressed in roots and flowers. Also present in stems and leaves, and, to a lower extent, in hypocotyls. Expressed in epidermal root hair cells (trichoblasts) and moves to root hairless cells (atrichoblasts) by a cell-to-cell movement through plasmodesmata (at protein level).

Its subcellular location is the nucleus. Transcription activator, when associated with MYB75/PAP1, MYB90/PAP2 or TT2. Involved in epidermal cell fate specification. Negatively regulates stomata formation, but, in association with TTG1 and MYB0/GL1, promotes trichome formation, branching and endoreplication. Also regulates trichome cell wall maturation. Together with MYB66/WER, promotes the formation of non-hair cells in root epidermis cells in the N position. Whereas together with CPC, promotes the formation of hair cells in root epidermis cells in the H position by inhibiting non-hair cell formation. Also seems to play a role in the activation of anthocyanin biosynthesis, probably together with MYB75/PAP1. Activates the transcription of GL2. The protein is Transcription factor GLABRA 3 (GL3) of Arabidopsis thaliana (Mouse-ear cress).